A 155-amino-acid chain; its full sequence is 6,7-dimethyl-8-ribityllumazine synthase (155 aa).

5-amino-6-(D-ribitylamino)uracil is bound by residues Phe-23, 57–59 (AFE), and 81–83 (AVI). 86–87 (AT) is a (2S)-2-hydroxy-3-oxobutyl phosphate binding site. The active-site Proton donor is the His-89. Position 114 (Phe-114) interacts with 5-amino-6-(D-ribitylamino)uracil. Arg-128 lines the (2S)-2-hydroxy-3-oxobutyl phosphate pocket.

This sequence belongs to the DMRL synthase family.

The enzyme catalyses (2S)-2-hydroxy-3-oxobutyl phosphate + 5-amino-6-(D-ribitylamino)uracil = 6,7-dimethyl-8-(1-D-ribityl)lumazine + phosphate + 2 H2O + H(+). It functions in the pathway cofactor biosynthesis; riboflavin biosynthesis; riboflavin from 2-hydroxy-3-oxobutyl phosphate and 5-amino-6-(D-ribitylamino)uracil: step 1/2. Functionally, catalyzes the formation of 6,7-dimethyl-8-ribityllumazine by condensation of 5-amino-6-(D-ribitylamino)uracil with 3,4-dihydroxy-2-butanone 4-phosphate. This is the penultimate step in the biosynthesis of riboflavin. The polypeptide is 6,7-dimethyl-8-ribityllumazine synthase (Geotalea daltonii (strain DSM 22248 / JCM 15807 / FRC-32) (Geobacter daltonii)).